Consider the following 339-residue polypeptide: Ketol-acid reductoisomerase (NADP(+)) (339 aa).

One can recognise a KARI N-terminal Rossmann domain in the interval 1–182 (MRVYYDRDAD…GGGRSGIIET (182 aa)). NADP(+)-binding positions include 24 to 27 (YGSQ), Arg48, Ser51, Thr53, and 83 to 86 (DELQ). His108 is an active-site residue. Gly134 is a binding site for NADP(+). A KARI C-terminal knotted domain is found at 183 to 328 (SFREECETDL…EKLRAMMPWI (146 aa)). Mg(2+)-binding residues include Asp191, Glu195, Glu227, and Glu231. Ser252 lines the substrate pocket.

This sequence belongs to the ketol-acid reductoisomerase family. Mg(2+) is required as a cofactor.

It catalyses the reaction (2R)-2,3-dihydroxy-3-methylbutanoate + NADP(+) = (2S)-2-acetolactate + NADPH + H(+). It carries out the reaction (2R,3R)-2,3-dihydroxy-3-methylpentanoate + NADP(+) = (S)-2-ethyl-2-hydroxy-3-oxobutanoate + NADPH + H(+). The protein operates within amino-acid biosynthesis; L-isoleucine biosynthesis; L-isoleucine from 2-oxobutanoate: step 2/4. It participates in amino-acid biosynthesis; L-valine biosynthesis; L-valine from pyruvate: step 2/4. Involved in the biosynthesis of branched-chain amino acids (BCAA). Catalyzes an alkyl-migration followed by a ketol-acid reduction of (S)-2-acetolactate (S2AL) to yield (R)-2,3-dihydroxy-isovalerate. In the isomerase reaction, S2AL is rearranged via a Mg-dependent methyl migration to produce 3-hydroxy-3-methyl-2-ketobutyrate (HMKB). In the reductase reaction, this 2-ketoacid undergoes a metal-dependent reduction by NADPH to yield (R)-2,3-dihydroxy-isovalerate. This is Ketol-acid reductoisomerase (NADP(+)) from Paramagnetospirillum magneticum (strain ATCC 700264 / AMB-1) (Magnetospirillum magneticum).